A 234-amino-acid chain; its full sequence is Thiamine import ATP-binding protein ThiQ (234 aa).

The region spanning 2–230 is the ABC transporter domain; that stretch reads LTLQQVHYYY…HSHPELVEFF (229 aa). ATP is bound at residue 32 to 39; that stretch reads GPSGAGKS.

It belongs to the ABC transporter superfamily. Thiamine importer (TC 3.A.1.19.1) family. The complex is composed of two ATP-binding proteins (ThiQ), two transmembrane proteins (ThiP) and a solute-binding protein (ThiB).

It is found in the cell inner membrane. The catalysed reaction is thiamine(out) + ATP + H2O = thiamine(in) + ADP + phosphate + H(+). In terms of biological role, part of the ABC transporter complex ThiBPQ involved in thiamine import. Responsible for energy coupling to the transport system. This Vibrio vulnificus (strain CMCP6) protein is Thiamine import ATP-binding protein ThiQ.